Reading from the N-terminus, the 423-residue chain is Transcription factor AP-2-epsilon (423 aa).

The tract at residues 1 to 108 (MLVHSYSSME…EDAGLLSQPH (108 aa)) is disordered. The span at 14–27 (GLSSSSPGGRLSQL) shows a compositional bias: low complexity. A PPxY motif motif is present at residues 50–55 (YFPPPY). Over residues 57–70 (QSSLSYSQSQDGGY) the composition is skewed to low complexity. Over residues 79-93 (SLNSLHQHQQAAWHS) the composition is skewed to polar residues. The interval 276 to 405 (RRKAANVTLL…YLLEALKLLD (130 aa)) is H-S-H (helix-span-helix), dimerization.

This sequence belongs to the AP-2 family. As to quaternary structure, binds DNA as a dimer. Can form homodimers or heterodimers with other AP-2 family members.

The protein resides in the nucleus. Its function is as follows. Sequence-specific DNA-binding protein that interacts with inducible viral and cellular enhancer elements to regulate transcription of selected genes. AP-2 factors bind to the consensus sequence 5'-GCCNNNGGC-3' and activate genes involved in a large spectrum of important biological functions. The chain is Transcription factor AP-2-epsilon from Danio rerio (Zebrafish).